We begin with the raw amino-acid sequence, 300 residues long: Acetylglutamate kinase (300 aa).

Substrate contacts are provided by residues 73–74 (GG), Arg-95, and Asn-197.

It belongs to the acetylglutamate kinase family. ArgB subfamily.

Its subcellular location is the cytoplasm. The catalysed reaction is N-acetyl-L-glutamate + ATP = N-acetyl-L-glutamyl 5-phosphate + ADP. Its pathway is amino-acid biosynthesis; L-arginine biosynthesis; N(2)-acetyl-L-ornithine from L-glutamate: step 2/4. Functionally, catalyzes the ATP-dependent phosphorylation of N-acetyl-L-glutamate. This chain is Acetylglutamate kinase, found in Polynucleobacter necessarius subsp. necessarius (strain STIR1).